A 152-amino-acid chain; its full sequence is MANSERTFIAIKPDGVQRGLVGEIIKRFEQKGFRLVGLKFLQASEDLLKEHYTDLKDRPFFTGLVKYMHSGPVVAMVWEGLNVVKTGRVMLGETNPADSKPGTIRGDFCIQVGRNIIHGSDSVKSAEKEISLWFQPEELVEYKSCAQNWIYE.

ATP-binding residues include Lys12, Phe60, Arg88, and Thr94. A Glycyl lysine isopeptide (Lys-Gly) (interchain with G-Cter in ubiquitin) cross-link involves residue Lys100. The ATP site is built by Arg105 and Asn115. The active-site Pros-phosphohistidine intermediate is the His118. 2 positions are modified to phosphoserine: Ser120 and Ser122. Lys124 is subject to N6-acetyllysine. Ser125 carries the phosphoserine modification.

The protein belongs to the NDK family. In terms of assembly, hexamer of two different chains: An and B (A6, A5B, A4B2, A3B3, A2B4, AB5, B6). Interacts with PRUNE1. Component of the SET complex, composed of at least ANP32A, APEX1, HMGB2, NME1, SET and TREX1. Within this complex, interacts directly with SET. Also interacts with TREX1, but only following translocation to the nucleus. The cofactor is Mg(2+).

It localises to the cytoplasm. It is found in the nucleus. It carries out the reaction a 2'-deoxyribonucleoside 5'-diphosphate + ATP = a 2'-deoxyribonucleoside 5'-triphosphate + ADP. It catalyses the reaction a ribonucleoside 5'-diphosphate + ATP = a ribonucleoside 5'-triphosphate + ADP. Its activity is regulated as follows. Autophosphorylation at His-118 increases serine/threonine protein kinase activity of the enzyme. Interaction with the SET complex inhibits exonuclease activity. Its function is as follows. Major role in the synthesis of nucleoside triphosphates other than ATP. The ATP gamma phosphate is transferred to the NDP beta phosphate via a ping-pong mechanism, using a phosphorylated active-site intermediate. Possesses nucleoside-diphosphate kinase, serine/threonine-specific protein kinase, geranyl and farnesyl pyrophosphate kinase, histidine protein kinase and 3'-5' exonuclease activities. Involved in cell proliferation, differentiation and development, signal transduction, G protein-coupled receptor endocytosis, and gene expression. Required for neural development including neural patterning and cell fate determination. During GZMA-mediated cell death, works in concert with TREX1. NME1 nicks one strand of DNA and TREX1 removes bases from the free 3' end to enhance DNA damage and prevent DNA end reannealing and rapid repair. This chain is Nucleoside diphosphate kinase A (Nme1), found in Mus musculus (Mouse).